The primary structure comprises 426 residues: Serine--tRNA ligase (426 aa).

231-233 contacts L-serine; that stretch reads TAE. Residues 262–264 and Val-278 contribute to the ATP site; that span reads RRE. Glu-285 is an L-serine binding site. ATP is bound at residue 349 to 352; it reads EVSS. Residue Ser-384 coordinates L-serine.

It belongs to the class-II aminoacyl-tRNA synthetase family. Type-1 seryl-tRNA synthetase subfamily. Homodimer. The tRNA molecule binds across the dimer.

The protein localises to the cytoplasm. The catalysed reaction is tRNA(Ser) + L-serine + ATP = L-seryl-tRNA(Ser) + AMP + diphosphate + H(+). The enzyme catalyses tRNA(Sec) + L-serine + ATP = L-seryl-tRNA(Sec) + AMP + diphosphate + H(+). The protein operates within aminoacyl-tRNA biosynthesis; selenocysteinyl-tRNA(Sec) biosynthesis; L-seryl-tRNA(Sec) from L-serine and tRNA(Sec): step 1/1. In terms of biological role, catalyzes the attachment of serine to tRNA(Ser). Is also able to aminoacylate tRNA(Sec) with serine, to form the misacylated tRNA L-seryl-tRNA(Sec), which will be further converted into selenocysteinyl-tRNA(Sec). This Chlamydia felis (strain Fe/C-56) (Chlamydophila felis) protein is Serine--tRNA ligase.